The following is a 375-amino-acid chain: MAAIKYQVIKKDARTKARLGILETPHGVIETPVFMPVGTQATVKAMTPDELKEMGATIILGNTYHLYLRPGHKIIEKAGGLHKFMNWDRAILTDSGGFQVFSLSSLRKITEDGVEFRSHIDGSKHFFTPEKVIEIQNSLGSDIIMSFDECAPYPADYDYVKRSMELTIKWAKRGKKAHKNTDRQALFGIVQGGTYKDLRRECAERLVDMDFPGYAIGGLSVGEPKDLMYEIIDFTTDYLPHDKPRYLMGVGTPEDLIEGVIRGVDMFDCVLPTRIARNGTVFTSRGKLIVRDAPYAEDFSPLDEECDCYTCKNYSRAYLRHLFKAKEILAARLATYHNLYFLIKLMEKIREAIRQDRLLEFKEEFLKKYYGNREE.

Aspartate 94 serves as the catalytic Proton acceptor. Residues 94–98 (DSGGF), aspartate 148, glutamine 191, and glycine 218 contribute to the substrate site. Positions 249 to 255 (GVGTPED) are RNA binding. Aspartate 268 (nucleophile) is an active-site residue. The segment at 273 to 277 (TRIAR) is RNA binding; important for wobble base 34 recognition. Cysteine 306, cysteine 308, cysteine 311, and histidine 337 together coordinate Zn(2+).

It belongs to the queuine tRNA-ribosyltransferase family. As to quaternary structure, homodimer. Within each dimer, one monomer is responsible for RNA recognition and catalysis, while the other monomer binds to the replacement base PreQ1. The cofactor is Zn(2+).

It catalyses the reaction 7-aminomethyl-7-carbaguanine + guanosine(34) in tRNA = 7-aminomethyl-7-carbaguanosine(34) in tRNA + guanine. It functions in the pathway tRNA modification; tRNA-queuosine biosynthesis. Its function is as follows. Catalyzes the base-exchange of a guanine (G) residue with the queuine precursor 7-aminomethyl-7-deazaguanine (PreQ1) at position 34 (anticodon wobble position) in tRNAs with GU(N) anticodons (tRNA-Asp, -Asn, -His and -Tyr). Catalysis occurs through a double-displacement mechanism. The nucleophile active site attacks the C1' of nucleotide 34 to detach the guanine base from the RNA, forming a covalent enzyme-RNA intermediate. The proton acceptor active site deprotonates the incoming PreQ1, allowing a nucleophilic attack on the C1' of the ribose to form the product. After dissociation, two additional enzymatic reactions on the tRNA convert PreQ1 to queuine (Q), resulting in the hypermodified nucleoside queuosine (7-(((4,5-cis-dihydroxy-2-cyclopenten-1-yl)amino)methyl)-7-deazaguanosine). The sequence is that of Queuine tRNA-ribosyltransferase from Caldanaerobacter subterraneus subsp. tengcongensis (strain DSM 15242 / JCM 11007 / NBRC 100824 / MB4) (Thermoanaerobacter tengcongensis).